The primary structure comprises 358 residues: Phospho-N-acetylmuramoyl-pentapeptide-transferase (358 aa).

10 helical membrane-spanning segments follow: residues 25–45, 73–93, 97–117, 134–154, 172–192, 197–217, 233–253, 261–281, 286–306, and 335–355; these read RTIYAVITALVVSFILGPWVI, TMGGILILASIVIPTLLWADL, YVWTTLFVILGYGLIGFTDDY, MFWQMLIAGGAVCFLVLVAGM, YLYIPFGMLVVVGASNAVNLT, GLAIGPVAINAATFLLFAYIA, GAGELAVLCGAMVGAGIGFLW, VFMGDVGSLSLGGGLGILAVI, MLLVIVGGIFVVEALSVIFQV, and KIIVRFWIITIILALVAISTL.

This sequence belongs to the glycosyltransferase 4 family. MraY subfamily. It depends on Mg(2+) as a cofactor.

It localises to the cell inner membrane. It carries out the reaction UDP-N-acetyl-alpha-D-muramoyl-L-alanyl-gamma-D-glutamyl-meso-2,6-diaminopimeloyl-D-alanyl-D-alanine + di-trans,octa-cis-undecaprenyl phosphate = di-trans,octa-cis-undecaprenyl diphospho-N-acetyl-alpha-D-muramoyl-L-alanyl-D-glutamyl-meso-2,6-diaminopimeloyl-D-alanyl-D-alanine + UMP. The protein operates within cell wall biogenesis; peptidoglycan biosynthesis. Its function is as follows. Catalyzes the initial step of the lipid cycle reactions in the biosynthesis of the cell wall peptidoglycan: transfers peptidoglycan precursor phospho-MurNAc-pentapeptide from UDP-MurNAc-pentapeptide onto the lipid carrier undecaprenyl phosphate, yielding undecaprenyl-pyrophosphoryl-MurNAc-pentapeptide, known as lipid I. The chain is Phospho-N-acetylmuramoyl-pentapeptide-transferase from Geobacter sulfurreducens (strain ATCC 51573 / DSM 12127 / PCA).